The following is a 675-amino-acid chain: Alpha-1,4-glucan:maltose-1-phosphate maltosyltransferase (675 aa).

Alpha-maltose 1-phosphate is bound by residues K256, Q316, and D351. D386 functions as the Nucleophile in the catalytic mechanism. Alpha-maltose 1-phosphate is bound at residue N387. The active-site Proton donor is E415. Alpha-maltose 1-phosphate is bound at residue 525–526 (KY).

Belongs to the glycosyl hydrolase 13 family. GlgE subfamily. As to quaternary structure, homodimer.

The enzyme catalyses alpha-maltose 1-phosphate + [(1-&gt;4)-alpha-D-glucosyl](n) = [(1-&gt;4)-alpha-D-glucosyl](n+2) + phosphate. Maltosyltransferase that uses maltose 1-phosphate (M1P) as the sugar donor to elongate linear or branched alpha-(1-&gt;4)-glucans. Is involved in a branched alpha-glucan biosynthetic pathway from trehalose, together with TreS, Mak and GlgB. The polypeptide is Alpha-1,4-glucan:maltose-1-phosphate maltosyltransferase (Corynebacterium glutamicum (strain ATCC 13032 / DSM 20300 / JCM 1318 / BCRC 11384 / CCUG 27702 / LMG 3730 / NBRC 12168 / NCIMB 10025 / NRRL B-2784 / 534)).